The chain runs to 240 residues: 2,3,4,5-tetrahydropyridine-2,6-dicarboxylate N-acetyltransferase (240 aa).

The protein belongs to the transferase hexapeptide repeat family. DapH subfamily.

It catalyses the reaction (S)-2,3,4,5-tetrahydrodipicolinate + acetyl-CoA + H2O = L-2-acetamido-6-oxoheptanedioate + CoA. It participates in amino-acid biosynthesis; L-lysine biosynthesis via DAP pathway; LL-2,6-diaminopimelate from (S)-tetrahydrodipicolinate (acetylase route): step 1/3. Its function is as follows. Catalyzes the transfer of an acetyl group from acetyl-CoA to tetrahydrodipicolinate. In Bacillus thuringiensis (strain Al Hakam), this protein is 2,3,4,5-tetrahydropyridine-2,6-dicarboxylate N-acetyltransferase.